We begin with the raw amino-acid sequence, 126 residues long: Fluoride-specific ion channel FluC 2 (126 aa).

4 consecutive transmembrane segments (helical) span residues 5 to 25 (TALTVAIWIGVMLIGGIGSVL), 44 to 64 (GTLTVNITGAALLGFLAGLAL), 68 to 88 (AALLAGTGFVGAYTTFSTWML), and 99 to 119 (MVSALANIVVSVVLGLAAALL). Residues Gly-78 and Thr-81 each contribute to the Na(+) site.

The protein belongs to the fluoride channel Fluc/FEX (TC 1.A.43) family.

The protein localises to the cell membrane. It catalyses the reaction fluoride(in) = fluoride(out). Its activity is regulated as follows. Na(+) is not transported, but it plays an essential structural role and its presence is essential for fluoride channel function. Functionally, fluoride-specific ion channel. Important for reducing fluoride concentration in the cell, thus reducing its toxicity. The protein is Fluoride-specific ion channel FluC 2 of Mycobacterium bovis (strain ATCC BAA-935 / AF2122/97).